The following is a 192-amino-acid chain: GTP cyclohydrolase-2 (192 aa).

Position 50–54 (50–54 (RLHSE)) interacts with GTP. Zn(2+)-binding residues include Cys-55, Cys-66, and Cys-68. Residues 92–94 (EGR) and Thr-114 each bind GTP. The active-site Proton acceptor is Asp-126. Catalysis depends on Arg-128, which acts as the Nucleophile. Residues Thr-149 and Lys-154 each contribute to the GTP site.

The protein belongs to the GTP cyclohydrolase II family. Zn(2+) serves as cofactor.

It catalyses the reaction GTP + 4 H2O = 2,5-diamino-6-hydroxy-4-(5-phosphoribosylamino)-pyrimidine + formate + 2 phosphate + 3 H(+). It functions in the pathway cofactor biosynthesis; riboflavin biosynthesis; 5-amino-6-(D-ribitylamino)uracil from GTP: step 1/4. Its function is as follows. Catalyzes the conversion of GTP to 2,5-diamino-6-ribosylamino-4(3H)-pyrimidinone 5'-phosphate (DARP), formate and pyrophosphate. The sequence is that of GTP cyclohydrolase-2 from Helicobacter pylori (strain P12).